Here is a 612-residue protein sequence, read N- to C-terminus: Rhamnogalacturonan exolyase YesX (612 aa).

Residue Asn119 coordinates substrate. Ca(2+)-binding residues include Asp120, Asp125, Asp127, Asp129, Glu131, and Glu133. Substrate is bound by residues Asp139, Glu154, and Arg174. Residues Asp189, Asp191, Asp193, Lys195, and Glu197 each contribute to the Ca(2+) site. Gly205 and Arg222 together coordinate substrate. His330, Asp336, Asp338, Asp340, Lys342, Glu344, Asp353, His354, His366, Asp368, Asp374, Asp376, Arg379, Gly381, Glu383, and Glu389 together coordinate Ca(2+). Arg419 provides a ligand contact to substrate. 4 residues coordinate Ca(2+): Asp472, Asp474, Val476, and Glu478. A substrate-binding site is contributed by 516-518 (NGT). Ca(2+) is bound by residues Asn527, Phe529, Asp531, Arg533, Glu535, Asn576, and Ala578. Residue Tyr579 coordinates substrate. Residue Asn580 participates in Ca(2+) binding.

This sequence belongs to the polysaccharide lyase 11 family. Monomer. Requires Mn(2+) as cofactor. The cofactor is Zn(2+). It depends on Co(2+) as a cofactor. Ca(2+) serves as cofactor.

The protein resides in the secreted. It catalyses the reaction Exotype eliminative cleavage of alpha-L-rhamnopyranosyl-(1-&gt;4)-alpha-D-galactopyranosyluronic acid bonds of rhamnogalacturonan I oligosaccharides containing alpha-L-rhamnopyranose at the reducing end and 4-deoxy-4,5-unsaturated D-galactopyranosyluronic acid at the non-reducing end. The products are the disaccharide 2-O-(4-deoxy-beta-L-threo-hex-4-enopyranuronosyl)-alpha-L-rhamnopyranose and the shortened rhamnogalacturonan oligosaccharide containing one 4-deoxy-4,5-unsaturated D-galactopyranosyluronic acid at the non-reducing end.. In terms of biological role, pectinolytic enzyme that degrades type I rhamnogalacturonan from plant cell walls and releases disaccharide products. Degrades rhamnogalacturonan, polygalacturonic acid and pectic acid. Has very low activity on pectin. The polypeptide is Rhamnogalacturonan exolyase YesX (yesX) (Bacillus subtilis (strain 168)).